Reading from the N-terminus, the 898-residue chain is Protein kintoun (898 aa).

2 disordered regions span residues 558 to 680 and 765 to 822; these read GELK…VESD and ILGQ…SGIS. The span at 575–602 shows a compositional bias: basic and acidic residues; that stretch reads INTRTVEDDTKVAKENVKKVDQETAHEG. Positions 603 to 616 are enriched in basic residues; that stretch reads KKSKKNQRRKNKKR. Residues 641–656 show a composition bias toward polar residues; the sequence is NEANSFEGTGSSSEAT.

Belongs to the PIH1 family. Kintoun subfamily.

The protein resides in the cytoplasm. In terms of biological role, required for cytoplasmic pre-assembly of axonemal dyneins, thereby playing a central role in motility in cilia and flagella. Involved in pre-assembly of dynein arm complexes in the cytoplasm before intraflagellar transport loads them for the ciliary compartment. The polypeptide is Protein kintoun (Aedes aegypti (Yellowfever mosquito)).